We begin with the raw amino-acid sequence, 261 residues long: N-acetyltransferase ECO1 (261 aa).

Residues 29-53 (LKCPKCEMKYSPNSIDDVATHKKYH) form a CCHH-type zinc finger. The N-acetyltransferase domain maps to 102 to 261 (VMIQENKPAE…SGHILIPCYL (160 aa)).

It belongs to the acetyltransferase family. ECO subfamily.

The protein resides in the nucleus. Probable acetyltransferase required for the establishment of sister chromatid cohesion and couple the processes of cohesion and DNA replication to ensure that only sister chromatids become paired together. In contrast to the structural cohesins, the deposition and establishment factors are required only during S phase. Acts by acetylating the cohesin complex component SMC3. The protein is N-acetyltransferase ECO1 (ECO1) of Candida glabrata (strain ATCC 2001 / BCRC 20586 / JCM 3761 / NBRC 0622 / NRRL Y-65 / CBS 138) (Yeast).